Reading from the N-terminus, the 136-residue chain is 6,7-dimethyl-8-ribityllumazine synthase (136 aa).

Residues Phe-11, 43 to 45 (SFD), and 67 to 69 (AVI) contribute to the 5-amino-6-(D-ribitylamino)uracil site. 72-73 (ET) provides a ligand contact to (2S)-2-hydroxy-3-oxobutyl phosphate. Residue His-75 is the Proton donor of the active site. Leu-100 lines the 5-amino-6-(D-ribitylamino)uracil pocket. Arg-115 contributes to the (2S)-2-hydroxy-3-oxobutyl phosphate binding site.

It belongs to the DMRL synthase family.

The catalysed reaction is (2S)-2-hydroxy-3-oxobutyl phosphate + 5-amino-6-(D-ribitylamino)uracil = 6,7-dimethyl-8-(1-D-ribityl)lumazine + phosphate + 2 H2O + H(+). The protein operates within cofactor biosynthesis; riboflavin biosynthesis; riboflavin from 2-hydroxy-3-oxobutyl phosphate and 5-amino-6-(D-ribitylamino)uracil: step 1/2. Catalyzes the formation of 6,7-dimethyl-8-ribityllumazine by condensation of 5-amino-6-(D-ribitylamino)uracil with 3,4-dihydroxy-2-butanone 4-phosphate. This is the penultimate step in the biosynthesis of riboflavin. The sequence is that of 6,7-dimethyl-8-ribityllumazine synthase from Picrophilus torridus (strain ATCC 700027 / DSM 9790 / JCM 10055 / NBRC 100828 / KAW 2/3).